Here is a 236-residue protein sequence, read N- to C-terminus: Ascorbate-specific transmembrane electron transporter 2 (236 aa).

Residues 1 to 13 (MGLGLGVRAAPFT) lie on the Cytoplasmic side of the membrane. The chain crosses the membrane as a helical span at residues 14–34 (YAAHALAVAAAAMVLVWAIYF). In terms of domain architecture, Cytochrome b561 spans 15 to 219 (AAHALAVAAA…FGASVVVAAI (205 aa)). The Extracellular portion of the chain corresponds to 35–50 (RGGLAIEATNKNLIFN). Residues 51 to 71 (VHPVLMLIGYIIIGGEAIMVY) form a helical membrane-spanning segment. His52 provides a ligand contact to heme b. 67–75 (AIMVYRVLP) is a binding site for L-ascorbate. Residues 72–84 (RVLPTSNHETNKL) lie on the Cytoplasmic side of the membrane. Residues 85–105 (IHLVLHGIALVLGAVGIYFAF) form a helical membrane-spanning segment. Residues His86 and His120 each coordinate heme b. Topologically, residues 106 to 122 (KNHNESGIANLYSLHSW) are extracellular. 116–125 (LYSLHSWIGI) serves as a coordination point for monodehydro-L-ascorbate radical. Residues 123–143 (IGIGTITLYGIQWIVGFVTFF) traverse the membrane as a helical segment. Residues 144–153 (FPGAAPNVKK) are Cytoplasmic-facing. The helical transmembrane segment at 154–174 (GVLPWHILFGLFVYILALANA) threads the bilayer. Residue His159 participates in heme b binding. Topologically, residues 175-201 (ELGFLEKLTFLESSGLDKYGTEAFLVN) are extracellular. A helical membrane pass occupies residues 202–222 (FTALVVVLFGASVVVAAIAPV). At 223 to 236 (RLEEPQGYVPIPEN) the chain is on the cytoplasmic side.

Heme b is required as a cofactor.

Its subcellular location is the membrane. In terms of biological role, two-heme-containing cytochrome. Catalyzes ascorbate-dependent trans-membrane electron transfer by utilizing a concerted H(+)/e(-) transfer mechanism. This Zea mays (Maize) protein is Ascorbate-specific transmembrane electron transporter 2.